The following is a 303-amino-acid chain: NAD(+)--arginine ADP-ribosyltransferase Lart1 (303 aa).

The protein localises to the secreted. The enzyme catalyses L-arginyl-[protein] + NAD(+) = N(omega)-(ADP-D-ribosyl)-L-arginyl-[protein] + nicotinamide + H(+). Functionally, ADP-ribosyltransferase that targets a specific class of NAD(+)-dependent glutamate dehydrogenase (GDH) enzymes found in fungi and protists, including many natural hosts of Legionella. Acts by targeting a conserved arginine residue in the NAD(+)-binding pocket of GDH, thereby blocking oxidative deamination of glutamate. Lart1 may target amoeba GDH to prevent a conserved stress response. In vitro, acts on Glud2 from the amoeba Dictyostelium discoideum (DdGluD2) and yeast Gdh2p but does not act on human or Legionella GDH homologs. The sequence is that of NAD(+)--arginine ADP-ribosyltransferase Lart1 from Legionella pneumophila subsp. pneumophila (strain Philadelphia 1 / ATCC 33152 / DSM 7513).